A 358-amino-acid chain; its full sequence is Probable butyrate kinase (358 aa).

Belongs to the acetokinase family.

It localises to the cytoplasm. It catalyses the reaction butanoate + ATP = butanoyl phosphate + ADP. The sequence is that of Probable butyrate kinase from Oceanobacillus iheyensis (strain DSM 14371 / CIP 107618 / JCM 11309 / KCTC 3954 / HTE831).